The chain runs to 227 residues: Prolactin-5A1 (227 aa).

The first 27 residues, 1-27, serve as a signal peptide directing secretion; the sequence is MQIQPHPSGALLLLLLSNLLMWENVAS. Residue Asn47 is glycosylated (N-linked (GlcNAc...) asparagine). The cysteines at positions 85 and 204 are disulfide-linked.

Belongs to the somatotropin/prolactin family. Expressed specifically in placenta. Highly expressed in invasive trophoblast cells lining the central placental vessel.

Its subcellular location is the secreted. The polypeptide is Prolactin-5A1 (Prl5a1) (Rattus norvegicus (Rat)).